The primary structure comprises 89 residues: uncharacterized protein (89 aa).

It to M.jannaschii MJ1436.

This is an uncharacterized protein from Methanothermobacter thermautotrophicus (strain ATCC 29096 / DSM 1053 / JCM 10044 / NBRC 100330 / Delta H) (Methanobacterium thermoautotrophicum).